Here is a 650-residue protein sequence, read N- to C-terminus: Threonine--tRNA ligase (650 aa).

Residues 1-66 enclose the TGS domain; that stretch reads MVQITLPDGS…EHDAQLAIVT (66 aa). A catalytic region spans residues 247–538; that stretch reads DHRKIGRDLD…LIENHAGAMP (292 aa). Cys338, His389, and His515 together coordinate Zn(2+).

It belongs to the class-II aminoacyl-tRNA synthetase family. As to quaternary structure, homodimer. Zn(2+) is required as a cofactor.

The protein resides in the cytoplasm. The enzyme catalyses tRNA(Thr) + L-threonine + ATP = L-threonyl-tRNA(Thr) + AMP + diphosphate + H(+). Its function is as follows. Catalyzes the attachment of threonine to tRNA(Thr) in a two-step reaction: L-threonine is first activated by ATP to form Thr-AMP and then transferred to the acceptor end of tRNA(Thr). Also edits incorrectly charged L-seryl-tRNA(Thr). The sequence is that of Threonine--tRNA ligase from Bordetella petrii (strain ATCC BAA-461 / DSM 12804 / CCUG 43448).